Consider the following 507-residue polypeptide: 3-[(3aS,4S,7aS)-7a-methyl-1,5-dioxo-octahydro-1H-inden-4-yl]propanoyl:CoA ligase (507 aa).

ATP-binding positions include 177–185, Asp391, Arg406, and Lys497; that span reads TSGTTGRSK.

Belongs to the ATP-dependent AMP-binding enzyme family.

The catalysed reaction is 3-[(3aS,4S,7aS)-7a-methyl-1,5-dioxo-octahydro-1H-inden-4-yl]propanoate + ATP + CoA = 3-[(3aS,4S,7aS)-7a-methyl-1,5-dioxo-octahydro-1H-inden-4-yl]propanoyl-CoA + AMP + diphosphate. It carries out the reaction 5-hydroxy-3-[(3aS,4S,5R,7aS)-7a-methyl-1,5-dioxo-octahydro-1H-inden-4-yl]propanoate + ATP + CoA = 3-[(3aS,4S,5R,7aS)-5-hydroxy-7a-methyl-1-oxo-octahydro-1H-inden-4-yl]propanoyl-CoA + AMP + diphosphate. Functionally, involved in the catabolism of the rings C and D of cholesterol. Catalyzes the ATP-dependent CoA thioesterification of 3aalpha-H-4alpha(3'-propanoate)-7abeta-methylhexahydro-1,5-indanedione (HIP) to yield HIP-CoA. It can also use the hydroxylated analogs of HIP, 5alpha-OH HIP and 1beta-OH HIP. It requires that the side chain at C17 is completely removed. This is 3-[(3aS,4S,7aS)-7a-methyl-1,5-dioxo-octahydro-1H-inden-4-yl]propanoyl:CoA ligase from Mycobacterium tuberculosis (strain ATCC 25618 / H37Rv).